A 388-amino-acid chain; its full sequence is Processive diacylglycerol beta-glucosyltransferase (388 aa).

The protein belongs to the glycosyltransferase 28 family. UgtP subfamily.

The protein localises to the cell membrane. It catalyses the reaction a 1,2-diacyl-3-O-(beta-D-glucopyranosyl)-sn-glycerol + UDP-alpha-D-glucose = a 1,2-diacyl-3-O-(beta-D-Glc-(1-&gt;6)-beta-D-Glc)-sn-glycerol + UDP + H(+). The catalysed reaction is a 1,2-diacyl-3-O-(beta-D-Glc-(1-&gt;6)-beta-D-Glc)-sn-glycerol + UDP-alpha-D-glucose = a 1,2-diacyl-3-O-(beta-D-Glc-(1-&gt;6)-beta-D-Glc-(1-&gt;6)-beta-D-Glc)-sn-glycerol + UDP + H(+). It carries out the reaction a 1,2-diacyl-sn-glycerol + UDP-alpha-D-glucose = a 1,2-diacyl-3-O-(beta-D-glucopyranosyl)-sn-glycerol + UDP + H(+). It functions in the pathway glycolipid metabolism; diglucosyl-diacylglycerol biosynthesis. Its function is as follows. Processive glucosyltransferase involved in the biosynthesis of both the bilayer- and non-bilayer-forming membrane glucolipids. Is able to successively transfer up to three glucosyl residues to diacylglycerol (DAG), thereby catalyzing the formation of beta-monoglucosyl-DAG (3-O-(beta-D-glucopyranosyl)-1,2-diacyl-sn-glycerol), beta-diglucosyl-DAG (3-O-(beta-D-glucopyranosyl-beta-(1-&gt;6)-D-glucopyranosyl)-1,2-diacyl-sn-glycerol) and beta-triglucosyl-DAG (3-O-(beta-D-glucopyranosyl-beta-(1-&gt;6)-D-glucopyranosyl-beta-(1-&gt;6)-D-glucopyranosyl)-1,2-diacyl-sn-glycerol). Beta-diglucosyl-DAG is the predominant glycolipid found in Bacillales and is also used as a membrane anchor for lipoteichoic acid (LTA). This is Processive diacylglycerol beta-glucosyltransferase from Bacillus cereus (strain AH187).